We begin with the raw amino-acid sequence, 40 residues long: Large ribosomal subunit protein bL36A (40 aa).

Belongs to the bacterial ribosomal protein bL36 family.

The protein is Large ribosomal subunit protein bL36A of Renibacterium salmoninarum (strain ATCC 33209 / DSM 20767 / JCM 11484 / NBRC 15589 / NCIMB 2235).